Here is a 365-residue protein sequence, read N- to C-terminus: tRNA-specific 2-thiouridylase MnmA (365 aa).

ATP contacts are provided by residues 9 to 16 (AMSGGVDS) and M35. C105 functions as the Nucleophile in the catalytic mechanism. Cysteines 105 and 203 form a disulfide. G129 serves as a coordination point for ATP. Residues 153–155 (KDQ) form an interaction with tRNA region. C203 serves as the catalytic Cysteine persulfide intermediate. Positions 308–309 (RY) are interaction with tRNA.

This sequence belongs to the MnmA/TRMU family.

The protein localises to the cytoplasm. It carries out the reaction S-sulfanyl-L-cysteinyl-[protein] + uridine(34) in tRNA + AH2 + ATP = 2-thiouridine(34) in tRNA + L-cysteinyl-[protein] + A + AMP + diphosphate + H(+). In terms of biological role, catalyzes the 2-thiolation of uridine at the wobble position (U34) of tRNA, leading to the formation of s(2)U34. This chain is tRNA-specific 2-thiouridylase MnmA, found in Pelotomaculum thermopropionicum (strain DSM 13744 / JCM 10971 / SI).